The chain runs to 319 residues: Acetyl-coenzyme A carboxylase carboxyl transferase subunit alpha (319 aa).

One can recognise a CoA carboxyltransferase C-terminal domain in the interval Asn32–Ala293.

This sequence belongs to the AccA family. In terms of assembly, acetyl-CoA carboxylase is a heterohexamer composed of biotin carboxyl carrier protein (AccB), biotin carboxylase (AccC) and two subunits each of ACCase subunit alpha (AccA) and ACCase subunit beta (AccD).

The protein resides in the cytoplasm. It catalyses the reaction N(6)-carboxybiotinyl-L-lysyl-[protein] + acetyl-CoA = N(6)-biotinyl-L-lysyl-[protein] + malonyl-CoA. It functions in the pathway lipid metabolism; malonyl-CoA biosynthesis; malonyl-CoA from acetyl-CoA: step 1/1. In terms of biological role, component of the acetyl coenzyme A carboxylase (ACC) complex. First, biotin carboxylase catalyzes the carboxylation of biotin on its carrier protein (BCCP) and then the CO(2) group is transferred by the carboxyltransferase to acetyl-CoA to form malonyl-CoA. This Xanthomonas campestris pv. campestris (strain B100) protein is Acetyl-coenzyme A carboxylase carboxyl transferase subunit alpha.